The chain runs to 233 residues: Uracil-DNA glycosylase (233 aa).

The active-site Proton acceptor is Asp-70.

The protein belongs to the uracil-DNA glycosylase (UDG) superfamily. UNG family.

The protein localises to the cytoplasm. It catalyses the reaction Hydrolyzes single-stranded DNA or mismatched double-stranded DNA and polynucleotides, releasing free uracil.. In terms of biological role, excises uracil residues from the DNA which can arise as a result of misincorporation of dUMP residues by DNA polymerase or due to deamination of cytosine. This Oleidesulfovibrio alaskensis (strain ATCC BAA-1058 / DSM 17464 / G20) (Desulfovibrio alaskensis) protein is Uracil-DNA glycosylase.